We begin with the raw amino-acid sequence, 536 residues long: Cytochrome P450 monooxygenase fscF (536 aa).

Residues 9-29 form a helical membrane-spanning segment; sequence VSWLCALFTAIALYCIAVAFY. Cys-464 contacts heme.

Belongs to the cytochrome P450 family. It depends on heme as a cofactor.

The protein localises to the membrane. The protein operates within secondary metabolite biosynthesis. Functionally, cytochrome P450 monooxygenase; part of the fragmented gene cluster that mediates the biosynthesis of fusarochromene, a tryptophan-derived metabolite closely related to a group of mycotoxins including fusarochromanone. Within the pathway, fscF catalyzes the epoxidation of desacetylfusarochromene which opens the way to the production of fusarochromanones. The first step of the pathway is the epimerization of L-tryptophan to D-tryptophan in the presence of the NRPS-like tryptophan epimerase fscC. D-tryptophan is subsequently hydroxylated by the tryptophan 6-hydroxylase fscE to yield 6-hydroxytryptophan. The pyrrole ring undergoes cleavaged by the tryptophan 2,3-dioxygenase fscD and is finally converted to 4-hydroxykyrunenine by the hydrolase fscH. The NRPS-like oxidoreductase fscA reduces the carboxyl group to primary alcohol and the DMATS-type prenyltransferase fscG performs prenylation, followed by the formation of a chromene ring catalyzed by the oxidoreductase fscI, which leads to desacetylfusarochromene. Epoxidation by fscF and rearrangement reactions of chromene double bonds convert compound desacetylfusarochromene to fusarochromanones. Although specific acetyltransferases were not found near the fsc gene cluster, several predicted enzymes containing the N-acetyltransferase superfamily domain are present in the genome of F.equiseti. These predicted enzymes may have the potential to convert desacetylfusarochromene to fusarochromene. The polypeptide is Cytochrome P450 monooxygenase fscF (Fusarium equiseti (Fusarium scirpi)).